The following is a 570-amino-acid chain: Adenine deaminase (570 aa).

The protein belongs to the metallo-dependent hydrolases superfamily. Adenine deaminase family. It depends on Mn(2+) as a cofactor.

The enzyme catalyses adenine + H2O + H(+) = hypoxanthine + NH4(+). The protein is Adenine deaminase of Clostridium acetobutylicum (strain ATCC 824 / DSM 792 / JCM 1419 / IAM 19013 / LMG 5710 / NBRC 13948 / NRRL B-527 / VKM B-1787 / 2291 / W).